Reading from the N-terminus, the 342-residue chain is MRTKTLQSIQDMVEQLNRRQSMLGDYESTLEERLALVCNPPKRLQRMKIPRRKSEYSSHDRLKRARKIYLEVLENFPLIFVPFILVVPPNACRTWKASEVQRHLKDCEGIHLSYETRANFDGYCRTLRFGLESALTLNLVSCSRPTTITEADDAWAYNAADMDTAVKFFSEAIYKAIESSPKRLREKENQFVKSTQCIQMRFPRHNQQDAIVRLDVGFDSEVVKALFPTAWERLSSVHGFRSSSQSTNRNIEQLEPHLYDNACFTLQGATVSEIPTVLGPHVYRAIKESQLRQWETDNFLLKTTDCVSLDISRRQPYEGTLCLRVGFSLGVFMATQLYSFDR.

A Bipartite nuclear localization signal motif is present at residues 46–68 (RMKIPRRKSEYSSHDRLKRARKI). The segment at 151–181 (ADDAWAYNAADMDTAVKFFSEAIYKAIESSP) is RNA recognition motif (RRM)-like domain.

Belongs to the hrmA family.

The protein resides in the nucleus. In terms of biological role, probably modulates the generation of the hypoxia-typic morphotype (called H-MORPH) with altered biofilm architecture that leads to increased host inflammation, rapid disease progression, and mortality in a murine model of invasive aspergillosis. The chain is Hypoxia responsive morphology factor C from Aspergillus fumigatus (strain CBS 144.89 / FGSC A1163 / CEA10) (Neosartorya fumigata).